The chain runs to 167 residues: uncharacterized protein (167 aa).

The segment at A95–N114 is disordered.

This is an uncharacterized protein from Haemophilus influenzae (Bacteriophage HP1).